Reading from the N-terminus, the 334-residue chain is Cysteine and histidine-rich domain-containing protein 1 (334 aa).

16 residues coordinate Zn(2+): Cys5, Cys10, Cys24, His27, Cys42, Cys43, Cys59, His64, Cys156, Cys161, Cys175, His178, Cys193, Cys194, Cys210, and His215. CHORD domains are found at residues 5 to 64 and 156 to 215; these read CYNR…KGQH and CKNG…KGTH. A CS domain is found at 226–315; that stretch reads VVPCRHDWHQ…AEFMTWARLE (90 aa).

Regulates centrosome duplication. The protein is Cysteine and histidine-rich domain-containing protein 1 (chordc1) of Xenopus laevis (African clawed frog).